We begin with the raw amino-acid sequence, 427 residues long: 3-phosphoshikimate 1-carboxyvinyltransferase (427 aa).

K23, S24, and R28 together coordinate 3-phosphoshikimate. Residue K23 coordinates phosphoenolpyruvate. Phosphoenolpyruvate contacts are provided by G97 and R125. 3-phosphoshikimate is bound by residues S169, S170, Q171, S197, D313, N336, and K340. Position 171 (Q171) interacts with phosphoenolpyruvate. The active-site Proton acceptor is the D313. Residues R344, R386, and K411 each contribute to the phosphoenolpyruvate site.

This sequence belongs to the EPSP synthase family. As to quaternary structure, monomer.

The protein resides in the cytoplasm. It carries out the reaction 3-phosphoshikimate + phosphoenolpyruvate = 5-O-(1-carboxyvinyl)-3-phosphoshikimate + phosphate. Its pathway is metabolic intermediate biosynthesis; chorismate biosynthesis; chorismate from D-erythrose 4-phosphate and phosphoenolpyruvate: step 6/7. Its function is as follows. Catalyzes the transfer of the enolpyruvyl moiety of phosphoenolpyruvate (PEP) to the 5-hydroxyl of shikimate-3-phosphate (S3P) to produce enolpyruvyl shikimate-3-phosphate and inorganic phosphate. The polypeptide is 3-phosphoshikimate 1-carboxyvinyltransferase (Yersinia ruckeri).